The chain runs to 362 residues: Probable prephenate dehydrogenase NovF (362 aa).

A Prephenate/arogenate dehydrogenase domain is found at 2–283 (RTAVIIGTGM…GIDGSNRVPG (282 aa)).

This sequence belongs to the prephenate/arogenate dehydrogenase family.

It carries out the reaction prephenate + NAD(+) = 3-(4-hydroxyphenyl)pyruvate + CO2 + NADH. Its pathway is antibiotic biosynthesis; novobiocin biosynthesis. Functionally, probable prephenate dehydrogenase that produces 4-hydroxyphenylpyruvate (4HPP) in the novobiocin biosynthesis pathway. Novobiocin is an aminocoumarin family antibiotic that targets bacterial DNA gyrases. This is Probable prephenate dehydrogenase NovF (novF) from Streptomyces niveus (Streptomyces spheroides).